Reading from the N-terminus, the 118-residue chain is Small ribosomal subunit protein uS13 (118 aa).

Positions 94–118 are disordered; it reads SLPLRGQRTKTNARTRKGPRKPIKR.

Belongs to the universal ribosomal protein uS13 family. Part of the 30S ribosomal subunit. Forms a loose heterodimer with protein S19. Forms two bridges to the 50S subunit in the 70S ribosome.

Functionally, located at the top of the head of the 30S subunit, it contacts several helices of the 16S rRNA. In the 70S ribosome it contacts the 23S rRNA (bridge B1a) and protein L5 of the 50S subunit (bridge B1b), connecting the 2 subunits; these bridges are implicated in subunit movement. Contacts the tRNAs in the A and P-sites. The protein is Small ribosomal subunit protein uS13 of Pseudoalteromonas translucida (strain TAC 125).